The following is a 219-amino-acid chain: Thiamine-phosphate synthase (219 aa).

4-amino-2-methyl-5-(diphosphooxymethyl)pyrimidine-binding positions include 48 to 52 and Asn84; that span reads QFRQK. 2 residues coordinate Mg(2+): Asp85 and Asp104. Ser123 is a binding site for 4-amino-2-methyl-5-(diphosphooxymethyl)pyrimidine. 150–152 lines the 2-[(2R,5Z)-2-carboxy-4-methylthiazol-5(2H)-ylidene]ethyl phosphate pocket; the sequence is TPS. Residue Lys153 coordinates 4-amino-2-methyl-5-(diphosphooxymethyl)pyrimidine. Residues Gly181 and 199–200 contribute to the 2-[(2R,5Z)-2-carboxy-4-methylthiazol-5(2H)-ylidene]ethyl phosphate site; that span reads IS.

It belongs to the thiamine-phosphate synthase family. It depends on Mg(2+) as a cofactor.

The enzyme catalyses 2-[(2R,5Z)-2-carboxy-4-methylthiazol-5(2H)-ylidene]ethyl phosphate + 4-amino-2-methyl-5-(diphosphooxymethyl)pyrimidine + 2 H(+) = thiamine phosphate + CO2 + diphosphate. It carries out the reaction 2-(2-carboxy-4-methylthiazol-5-yl)ethyl phosphate + 4-amino-2-methyl-5-(diphosphooxymethyl)pyrimidine + 2 H(+) = thiamine phosphate + CO2 + diphosphate. It catalyses the reaction 4-methyl-5-(2-phosphooxyethyl)-thiazole + 4-amino-2-methyl-5-(diphosphooxymethyl)pyrimidine + H(+) = thiamine phosphate + diphosphate. The protein operates within cofactor biosynthesis; thiamine diphosphate biosynthesis; thiamine phosphate from 4-amino-2-methyl-5-diphosphomethylpyrimidine and 4-methyl-5-(2-phosphoethyl)-thiazole: step 1/1. In terms of biological role, condenses 4-methyl-5-(beta-hydroxyethyl)thiazole monophosphate (THZ-P) and 2-methyl-4-amino-5-hydroxymethyl pyrimidine pyrophosphate (HMP-PP) to form thiamine monophosphate (TMP). The polypeptide is Thiamine-phosphate synthase (Helicobacter pylori (strain HPAG1)).